The primary structure comprises 175 residues: D-glycero-beta-D-manno-heptose-1,7-bisphosphate 7-phosphatase (175 aa).

Aspartate 7 serves as the catalytic Nucleophile. Residues aspartate 7 and aspartate 9 each contribute to the Mg(2+) site. Substrate is bound by residues 7 to 9, 15 to 19, and 50 to 53; these read DRD, DSDAY, and TNQS. The active-site Proton donor is the aspartate 9. The Zn(2+) site is built by cysteine 89, histidine 91, cysteine 97, and cysteine 99. 100–101 is a binding site for substrate; the sequence is RK. Aspartate 126 contributes to the Mg(2+) binding site.

Belongs to the gmhB family. As to quaternary structure, monomer. It depends on Mg(2+) as a cofactor. The cofactor is Zn(2+).

It is found in the cytoplasm. It carries out the reaction D-glycero-beta-D-manno-heptose 1,7-bisphosphate + H2O = D-glycero-beta-D-manno-heptose 1-phosphate + phosphate. It functions in the pathway nucleotide-sugar biosynthesis; ADP-L-glycero-beta-D-manno-heptose biosynthesis; ADP-L-glycero-beta-D-manno-heptose from D-glycero-beta-D-manno-heptose 7-phosphate: step 2/4. The protein operates within bacterial outer membrane biogenesis; LPS core biosynthesis. Functionally, converts the D-glycero-beta-D-manno-heptose 1,7-bisphosphate (beta-HBP) intermediate into D-glycero-beta-D-manno-heptose 1-phosphate by removing the phosphate group at the C-7 position. The chain is D-glycero-beta-D-manno-heptose-1,7-bisphosphate 7-phosphatase from Pseudomonas putida (strain ATCC 47054 / DSM 6125 / CFBP 8728 / NCIMB 11950 / KT2440).